Here is a 474-residue protein sequence, read N- to C-terminus: Probable fucosyltransferase 9 (474 aa).

The chain crosses the membrane as a helical; Signal-anchor for type II membrane protein span at residues 1–21 (MIKLTIAIATCLVLCLVLLLP). The Lumenal portion of the chain corresponds to 22 to 474 (SSNISYRHKY…LKLVDVSDEL (453 aa)). Asn24, Asn39, and Asn208 each carry an N-linked (GlcNAc...) asparagine glycan.

The protein belongs to the glycosyltransferase 37 family. As to expression, expressed in leaves and stems.

The protein localises to the golgi apparatus. It localises to the golgi stack membrane. Its pathway is protein modification; protein glycosylation. May be involved in cell wall biosynthesis. May act as a fucosyltransferase. The protein is Probable fucosyltransferase 9 (FUT9) of Arabidopsis thaliana (Mouse-ear cress).